Consider the following 160-residue polypeptide: Cytochrome b6-f complex subunit 4 (160 aa).

3 consecutive transmembrane segments (helical) span residues leucine 36–valine 56, leucine 95–glutamate 115, and threonine 131–isoleucine 151.

It belongs to the cytochrome b family. PetD subfamily. In terms of assembly, the 4 large subunits of the cytochrome b6-f complex are cytochrome b6, subunit IV (17 kDa polypeptide, petD), cytochrome f and the Rieske protein, while the 4 small subunits are petG, petL, petM and petN. The complex functions as a dimer.

It is found in the plastid. Its subcellular location is the chloroplast thylakoid membrane. Its function is as follows. Component of the cytochrome b6-f complex, which mediates electron transfer between photosystem II (PSII) and photosystem I (PSI), cyclic electron flow around PSI, and state transitions. The sequence is that of Cytochrome b6-f complex subunit 4 from Mesostigma viride (Green alga).